The primary structure comprises 344 residues: N-acetyl-gamma-glutamyl-phosphate reductase (344 aa).

C148 is a catalytic residue.

It belongs to the NAGSA dehydrogenase family. Type 1 subfamily.

Its subcellular location is the cytoplasm. It carries out the reaction N-acetyl-L-glutamate 5-semialdehyde + phosphate + NADP(+) = N-acetyl-L-glutamyl 5-phosphate + NADPH + H(+). Its pathway is amino-acid biosynthesis; L-arginine biosynthesis; N(2)-acetyl-L-ornithine from L-glutamate: step 3/4. Catalyzes the NADPH-dependent reduction of N-acetyl-5-glutamyl phosphate to yield N-acetyl-L-glutamate 5-semialdehyde. The polypeptide is N-acetyl-gamma-glutamyl-phosphate reductase (Geobacillus thermodenitrificans (strain NG80-2)).